The sequence spans 475 residues: Probable pectate lyase 7 (475 aa).

The N-terminal stretch at 1–24 (METARLFKLVCVICIASLIPTIRA) is a signal peptide. 2 N-linked (GlcNAc...) asparagine glycosylation sites follow: asparagine 67 and asparagine 96. A disordered region spans residues 91–117 (ISSPTNSTRRSLTGRGKGKGKGKWSKL). The Ca(2+) site is built by aspartate 271, aspartate 295, and aspartate 299. Residue arginine 351 is part of the active site.

Belongs to the polysaccharide lyase 1 family. Ca(2+) is required as a cofactor.

It carries out the reaction Eliminative cleavage of (1-&gt;4)-alpha-D-galacturonan to give oligosaccharides with 4-deoxy-alpha-D-galact-4-enuronosyl groups at their non-reducing ends.. It functions in the pathway glycan metabolism; pectin degradation; 2-dehydro-3-deoxy-D-gluconate from pectin: step 2/5. The polypeptide is Probable pectate lyase 7 (Arabidopsis thaliana (Mouse-ear cress)).